The primary structure comprises 126 residues: uncharacterized protein (126 aa).

An HTH hxlR-type domain is found at 8–106; it reads ISVEATLEVI…WGANHINRVY (99 aa).

This is an uncharacterized protein from Bacillus subtilis (strain 168).